Consider the following 368-residue polypeptide: tRNA-specific 2-thiouridylase MnmA (368 aa).

Residues 11-18 (GMSGGVDS) and M37 contribute to the ATP site. Positions 97–99 (NPD) are interaction with target base in tRNA. C102 functions as the Nucleophile in the catalytic mechanism. Cysteines 102 and 199 form a disulfide. G127 serves as a coordination point for ATP. The interaction with tRNA stretch occupies residues 149-151 (KDQ). The Cysteine persulfide intermediate role is filled by C199. Residues 311–312 (RY) form an interaction with tRNA region.

This sequence belongs to the MnmA/TRMU family. As to quaternary structure, interacts with TusE.

It localises to the cytoplasm. The catalysed reaction is S-sulfanyl-L-cysteinyl-[protein] + uridine(34) in tRNA + AH2 + ATP = 2-thiouridine(34) in tRNA + L-cysteinyl-[protein] + A + AMP + diphosphate + H(+). In terms of biological role, catalyzes the 2-thiolation of uridine at the wobble position (U34) of tRNA(Lys), tRNA(Glu) and tRNA(Gln), leading to the formation of s(2)U34, the first step of tRNA-mnm(5)s(2)U34 synthesis. Sulfur is provided by IscS, via a sulfur-relay system. Binds ATP and its substrate tRNAs. This is tRNA-specific 2-thiouridylase MnmA from Salmonella typhimurium (strain LT2 / SGSC1412 / ATCC 700720).